A 502-amino-acid chain; its full sequence is MHNGFDALQLHANRLRGVTIPDLLAAELKRPEQYARQVGPLYFNFARQKYDCVALEALFALARNHNVAGAFQRMFCGEQVNVTEGRAVLHTALRGDLSGTSVAVAAYTAAAKVRERMYALIAGLDASEVTDIISVGIGGSDLGPRLVVDALRPISQGRFRVHFVSNVDGAAMRRTLDMLDPSRTAGILISKTFGTQETLLNGRILYDWLGGSERLYAVSANPERAAHAFDIVPTQVLPIWDWVGGRYSLWSAVGFPIALAIGSQRFEELLAGAAEFDAYALRVPLEENVAVLHGLTAVWNRNFLGCATYAVMAYDQRLALLPAYLQQLVMESLGKRVKCDGTPVDRDTVPVWWGGVGTDVQHSFFQALHQGTNIVPADFIGTIRNDDPYTENHFALNANLLAQIEVLANGQLSDDPHRVYPGGNPSTLILLDALTPQALGGLIAMYEHSVYVQSVIWGINAFDQFGVELGKHLAVQLLPALKGESVEVVDPVTRAVLVRLRG.

The active-site Proton donor is the glutamate 331. Active-site residues include histidine 362 and lysine 471.

It belongs to the GPI family.

It localises to the cytoplasm. It catalyses the reaction alpha-D-glucose 6-phosphate = beta-D-fructose 6-phosphate. It functions in the pathway carbohydrate biosynthesis; gluconeogenesis. The protein operates within carbohydrate degradation; glycolysis; D-glyceraldehyde 3-phosphate and glycerone phosphate from D-glucose: step 2/4. Functionally, catalyzes the reversible isomerization of glucose-6-phosphate to fructose-6-phosphate. The polypeptide is Glucose-6-phosphate isomerase (Xylella fastidiosa (strain 9a5c)).